Consider the following 202-residue polypeptide: Superoxide dismutase [Mn] (202 aa).

His-27 is a binding site for Mn(2+). Thr-34 and Thr-70 each carry phosphothreonine. The Mn(2+) site is built by His-82, Asp-164, and His-168.

This sequence belongs to the iron/manganese superoxide dismutase family. As to quaternary structure, homodimer; under aerobic conditions. Under anaerobic conditions it is a component of the so-called 'green protein' complex (GPC), which consists of at least two components, SodA and a nucleoside diphosphate kinase (NDK). Mn(2+) serves as cofactor.

It is found in the cytoplasm. It catalyses the reaction 2 superoxide + 2 H(+) = H2O2 + O2. Its function is as follows. Destroys superoxide anion radicals which are normally produced within the cells and which are toxic to biological systems. Active only in homodimeric state. The chain is Superoxide dismutase [Mn] (sodA) from Virgibacillus halodenitrificans (Bacillus halodenitrificans).